The chain runs to 280 residues: MFASPGPELFQFGPFVLRWYGLLIAAAVLIGLNLSSSLAQQRKLENGLISDLLPLLVLFSVIGARIYYVAFEWHNYAATPLKALAIWEGGIAIHGALIAGTLTLILFCRWRQQSFWDVLDVLVPSVALGQSIGRWGNFFNSEAFGIPTDLPWKLFIPEQNRPIIYVNQEFFHPTFLYESLWNLALFIILILLFRWGSKHLNKLPAGAMSCIYLMGYSLGRVWIEGLRIDSLCIGALPPACEGGLRIAQLMSGVMALAGSLGLWWLYGRKKPLPDPGFRPN.

4 consecutive transmembrane segments (helical) span residues 12–32 (FGPF…LIGL), 52–72 (LLPL…VAFE), 86–106 (IWEG…TLIL), and 115–133 (FWDV…QSIG). Arginine 134 lines the a 1,2-diacyl-sn-glycero-3-phospho-(1'-sn-glycerol) pocket. A run of 3 helical transmembrane segments spans residues 173-193 (PTFL…ILLF), 203-223 (LPAG…RVWI), and 246-266 (IAQL…WWLY).

The protein belongs to the Lgt family.

The protein localises to the cell inner membrane. The enzyme catalyses L-cysteinyl-[prolipoprotein] + a 1,2-diacyl-sn-glycero-3-phospho-(1'-sn-glycerol) = an S-1,2-diacyl-sn-glyceryl-L-cysteinyl-[prolipoprotein] + sn-glycerol 1-phosphate + H(+). It participates in protein modification; lipoprotein biosynthesis (diacylglyceryl transfer). Functionally, catalyzes the transfer of the diacylglyceryl group from phosphatidylglycerol to the sulfhydryl group of the N-terminal cysteine of a prolipoprotein, the first step in the formation of mature lipoproteins. The chain is Phosphatidylglycerol--prolipoprotein diacylglyceryl transferase from Synechococcus sp. (strain CC9902).